We begin with the raw amino-acid sequence, 404 residues long: Multidrug resistance protein MdtG (404 aa).

11 consecutive transmembrane segments (helical) span residues 19-39 (LGCFLTGAAFSLVMPFLPLYV), 56-76 (LVFSITFLFSAIASPFWGGLA), 90-110 (LGMAIVMLLMGMAQNIWQFLI), 113-133 (ALLGLLGGFIPNANALIATQV), 144-164 (TLSTGGVSGALLGPLAGGLLA), 171-191 (PVFFITASVLFICFLLTFFFI), 222-242 (LFVTTLIIQVATGSIAPILTL), 254-274 (IAFISGMIASVPGVAALLSAP), 288-308 (ILIVALIISVLLLIPMSFVQT), 317-337 (FLLGAADGALLPAVQTLLVYN), and 376-396 (AVFCVTAGVVLFNAIYSWNSL).

This sequence belongs to the major facilitator superfamily. DHA1 family. MdtG (TC 2.A.1.2.20) subfamily.

The protein localises to the cell inner membrane. The sequence is that of Multidrug resistance protein MdtG from Salmonella agona (strain SL483).